The chain runs to 127 residues: Fatty acid binding protein 1-A, liver (127 aa).

It belongs to the calycin superfamily. Fatty-acid binding protein (FABP) family. In terms of tissue distribution, in adults, weakly expressed in the intestine.

It is found in the cytoplasm. Binds free fatty acids and their coenzyme A derivatives, bilirubin, and some other small molecules in the cytoplasm. May be involved in intracellular lipid transport. The protein is Fatty acid binding protein 1-A, liver of Danio rerio (Zebrafish).